The chain runs to 461 residues: L-serine dehydratase (461 aa).

Belongs to the iron-sulfur dependent L-serine dehydratase family. It depends on [4Fe-4S] cluster as a cofactor.

The enzyme catalyses L-serine = pyruvate + NH4(+). Its pathway is carbohydrate biosynthesis; gluconeogenesis. This chain is L-serine dehydratase (sdaA), found in Mycobacterium bovis (strain ATCC BAA-935 / AF2122/97).